A 390-amino-acid chain; its full sequence is Alkanesulfonate monooxygenase (390 aa).

The protein belongs to the SsuD family.

The enzyme catalyses an alkanesulfonate + FMNH2 + O2 = an aldehyde + FMN + sulfite + H2O + 2 H(+). Its function is as follows. Catalyzes the desulfonation of aliphatic sulfonates. This is Alkanesulfonate monooxygenase from Cupriavidus taiwanensis (strain DSM 17343 / BCRC 17206 / CCUG 44338 / CIP 107171 / LMG 19424 / R1) (Ralstonia taiwanensis (strain LMG 19424)).